Reading from the N-terminus, the 190-residue chain is Protein hunchback (190 aa).

3 disordered regions span residues Glu13–Leu59, Ala86–Met110, and Gln142–Ala190. Residues His17 to Leu31 are compositionally biased toward basic residues. Positions Pro90–Pro100 are enriched in polar residues. Basic and acidic residues predominate over residues Glu171–Ala190.

This sequence belongs to the hunchback C2H2-type zinc-finger protein family.

The protein resides in the nucleus. Gap class segmentation protein that controls development of head structures. This chain is Protein hunchback (hb), found in Scaptomyza crassifemur (Fruit fly).